A 325-amino-acid chain; its full sequence is Small ribosomal subunit biogenesis GTPase RsgA (325 aa).

Residues 80-241 (LSKQIHIIAS…IIDTPGIKGF (162 aa)) form the CP-type G domain. GTP contacts are provided by residues 129–132 (NKID) and 183–191 (GHSGVGKST). Residues Cys-265, Cys-270, His-272, and Cys-278 each contribute to the Zn(2+) site.

It belongs to the TRAFAC class YlqF/YawG GTPase family. RsgA subfamily. Monomer. Associates with 30S ribosomal subunit, binds 16S rRNA. It depends on Zn(2+) as a cofactor.

Its subcellular location is the cytoplasm. Functionally, one of several proteins that assist in the late maturation steps of the functional core of the 30S ribosomal subunit. Helps release RbfA from mature subunits. May play a role in the assembly of ribosomal proteins into the subunit. Circularly permuted GTPase that catalyzes slow GTP hydrolysis, GTPase activity is stimulated by the 30S ribosomal subunit. This is Small ribosomal subunit biogenesis GTPase RsgA from Flavobacterium johnsoniae (strain ATCC 17061 / DSM 2064 / JCM 8514 / BCRC 14874 / CCUG 350202 / NBRC 14942 / NCIMB 11054 / UW101) (Cytophaga johnsonae).